A 493-amino-acid polypeptide reads, in one-letter code: Glycerol kinase (493 aa).

Residue Thr-11 participates in ADP binding. ATP-binding residues include Thr-11, Thr-12, and Ser-13. Thr-11 contributes to the sn-glycerol 3-phosphate binding site. Arg-15 lines the ADP pocket. Sn-glycerol 3-phosphate contacts are provided by Arg-80, Glu-81, Tyr-132, and Asp-241. The glycerol site is built by Arg-80, Glu-81, Tyr-132, Asp-241, and Gln-242. ADP contacts are provided by Thr-263 and Gly-306. ATP-binding residues include Thr-263, Gly-306, Gln-310, and Gly-408. ADP is bound at residue Gly-408.

This sequence belongs to the FGGY kinase family.

It carries out the reaction glycerol + ATP = sn-glycerol 3-phosphate + ADP + H(+). It participates in polyol metabolism; glycerol degradation via glycerol kinase pathway; sn-glycerol 3-phosphate from glycerol: step 1/1. Inhibited by fructose 1,6-bisphosphate (FBP). In terms of biological role, key enzyme in the regulation of glycerol uptake and metabolism. Catalyzes the phosphorylation of glycerol to yield sn-glycerol 3-phosphate. The protein is Glycerol kinase of Cereibacter sphaeroides (strain ATCC 17029 / ATH 2.4.9) (Rhodobacter sphaeroides).